Consider the following 219-residue polypeptide: Protein-L-isoaspartate O-methyltransferase (219 aa).

The active site involves S64.

Belongs to the methyltransferase superfamily. L-isoaspartyl/D-aspartyl protein methyltransferase family.

The protein resides in the cytoplasm. It carries out the reaction [protein]-L-isoaspartate + S-adenosyl-L-methionine = [protein]-L-isoaspartate alpha-methyl ester + S-adenosyl-L-homocysteine. In terms of biological role, catalyzes the methyl esterification of L-isoaspartyl residues in peptides and proteins that result from spontaneous decomposition of normal L-aspartyl and L-asparaginyl residues. It plays a role in the repair and/or degradation of damaged proteins. The protein is Protein-L-isoaspartate O-methyltransferase of Chlorobaculum parvum (strain DSM 263 / NCIMB 8327) (Chlorobium vibrioforme subsp. thiosulfatophilum).